Reading from the N-terminus, the 113-residue chain is Large ribosomal subunit protein eL33 (113 aa).

Belongs to the eukaryotic ribosomal protein eL33 family.

The protein is Large ribosomal subunit protein eL33 (RPL35A) of Tetrahymena thermophila (strain SB210).